The chain runs to 410 residues: MSLMVVSMACVGFFLLEGPWPHVGGQDKPFLSAWPGTVVSEGQHVTLQCRSRLGFNEFSLSKEDGMPVPELYNRIFRNSFLMGPVTPAHAGTYRCCSSHPHSPTGWSAPSNPVVIMVTGVHRKPSLLAHPGPLVKSGETVILQCWSDVRFERFLLHREGITEDPLRLVGQLHDAGSQVNYSMGPMTPALAGTYRCFGSVTHLPYELSAPSDPLDIVVVGLYGKPSLSAQPGPTVQAGENVTLSCSSRSLFDIYHLSREAEAGELRLTAVLRVNGTFQANFPLGPVTHGGNYRCFGSFRALPHAWSDPSDPLPVSVTGNSRHLHVLIGTSVVIIPFAILLFFLLHRWCANKKNAVVMDQEPAGNRTVNREDSDEQDPQEVTYAQLNHCVFTQRKITRPSQRPKTPPTDTSV.

Positions 1–25 (MSLMVVSMACVGFFLLEGPWPHVGG) are cleaved as a signal peptide. The Extracellular portion of the chain corresponds to 26 to 322 (QDKPFLSAWP…VSVTGNSRHL (297 aa)). 3 Ig-like C2-type domains span residues 42–97 (GQHV…RCCS), 137–197 (GETV…RCFG), and 237–295 (GENV…RCFG). Cystine bridges form between Cys-49/Cys-95 and Cys-144/Cys-195. Residues Asn-179, Asn-239, and Asn-273 are each glycosylated (N-linked (GlcNAc...) asparagine). An intrachain disulfide couples Cys-244 to Cys-293. A helical transmembrane segment spans residues 323 to 343 (HVLIGTSVVIIPFAILLFFLL). Topologically, residues 344 to 410 (HRWCANKKNA…PKTPPTDTSV (67 aa)) are cytoplasmic.

It belongs to the immunoglobulin superfamily.

The protein localises to the cell membrane. Receptor on natural killer cells. May inhibit the activity of NK cells thus preventing cell lysis. In Homo sapiens (Human), this protein is Killer cell immunoglobulin-like receptor 3DL3 (KIR3DL3).